The following is a 416-amino-acid chain: D-amino acid dehydrogenase (416 aa).

An FAD-binding site is contributed by 3–17 (ITILGSGVIGVTTAY).

It belongs to the DadA oxidoreductase family. It depends on FAD as a cofactor.

The enzyme catalyses a D-alpha-amino acid + A + H2O = a 2-oxocarboxylate + AH2 + NH4(+). The protein operates within amino-acid degradation; D-alanine degradation; NH(3) and pyruvate from D-alanine: step 1/1. Its function is as follows. Oxidative deamination of D-amino acids. In Brucella anthropi (strain ATCC 49188 / DSM 6882 / CCUG 24695 / JCM 21032 / LMG 3331 / NBRC 15819 / NCTC 12168 / Alc 37) (Ochrobactrum anthropi), this protein is D-amino acid dehydrogenase.